Here is a 318-residue protein sequence, read N- to C-terminus: Cephalosporin-C deacetylase (318 aa).

Residue Tyr91 coordinates substrate. Ser181 functions as the Nucleophile in the catalytic mechanism. Residues Asp269 and His298 each act as charge relay system in the active site.

The protein belongs to the carbohydrate esterase 7 family. As to quaternary structure, homohexamer.

It is found in the cytoplasm. The enzyme catalyses Deacetylation of xylans and xylo-oligosaccharides.. It carries out the reaction cephalosporin C + H2O = deacetylcephalosporin C + acetate + H(+). In terms of biological role, esterase that removed acetyl groups from a number of O-acetylated small substrates, such as acetylated xylose, short xylooligosaccharides and cephalosporin C. Has no activity towards polymeric acetylated xylan. Cannot cleave amide linkages. The polypeptide is Cephalosporin-C deacetylase (cah) (Bacillus subtilis (strain 168)).